The following is a 465-amino-acid chain: Glutamate--tRNA ligase 2 (465 aa).

The 'HIGH' region signature appears at 8 to 18; that stretch reads PSPTGLMHLGN. Residues 249–253 carry the 'KMSKS' region motif; the sequence is PLSKR. Lys-252 contacts ATP.

The protein belongs to the class-I aminoacyl-tRNA synthetase family. Glutamate--tRNA ligase type 1 subfamily. Monomer.

The protein resides in the cytoplasm. The enzyme catalyses tRNA(Glu) + L-glutamate + ATP = L-glutamyl-tRNA(Glu) + AMP + diphosphate. In terms of biological role, catalyzes the attachment of glutamate to tRNA(Glu) in a two-step reaction: glutamate is first activated by ATP to form Glu-AMP and then transferred to the acceptor end of tRNA(Glu). The chain is Glutamate--tRNA ligase 2 from Coxiella burnetii (strain CbuK_Q154) (Coxiella burnetii (strain Q154)).